The sequence spans 417 residues: MVLAQRQKEELNRAIADYLFANGYVKALNAFREESQLAGENDRKYDGLLEKKWTSVIRLQKKVMDLEAKLNEAEKEFQSMQNAIGFGVAGAAPGSGLSDRSDRRDVDAIPRPPAKFTLTGHRSPITRVLFHPHYNVFVSASEDASIKVWDYETGEFEHTLKGHTDSVQDVAFDPSGKFLASCSADMQVKLWDFTIYQCIKTLTGHDHNVSSVAFLPSGDFLVSASRDKTIKMWEVSTGYCTKTFIGHTEWIRSVRPSPEGNLLASCSNDHTIRIWSVESRECQVVLRGHEHVVECIAWASHPQNLNSLPSSMNSSLLLVSGSRDRTIRFWDVNIGICLFVLIGHDNWVRQLVFHPHGRLLLSASDDKTIRVWDLKNRRCHKTLNAHSHFVTSLDVNRLAPYAITGSVDQTIHIWDCR.

The LisH domain maps to 7–39; it reads QKEELNRAIADYLFANGYVKALNAFREESQLAG. The stretch at 54–86 forms a coiled coil; the sequence is TSVIRLQKKVMDLEAKLNEAEKEFQSMQNAIGF. WD repeat units lie at residues 120-159, 162-203, 204-243, 246-285, 288-340, 343-382, and 385-417; these read GHRS…FEHT, GHTD…KTLT, GHDH…CTKT, GHTE…CQVV, GHEH…CLFV, GHDN…CHKT, and AHSH…WDCR.

This sequence belongs to the WD repeat LIS1/nudF family.

Its subcellular location is the cytoplasm. The protein resides in the cytoskeleton. It is found in the microtubule organizing center. It localises to the centrosome. Functionally, positively regulates the activity of the minus-end directed microtubule motor protein dynein. May enhance dynein-mediated microtubule sliding by targeting dynein to the microtubule plus end. Required for several dynein- and microtubule-dependent processes. This chain is Lissencephaly-1 homolog, found in Schistosoma mansoni (Blood fluke).